Consider the following 179-residue polypeptide: Replication restart protein DnaT (179 aa).

Residues 156 to 179 are disordered; the sequence is GGLPKRDVNTVSEPDSQIPPGFRG.

It belongs to the DnaT family. Homooligomerizes. Interacts with PriB. Component of the replication restart primosome. Primosome assembly occurs via a 'hand-off' mechanism. PriA binds to replication forks, subsequently PriB then DnaT bind; DnaT then displaces ssDNA to generate the helicase loading substrate.

In terms of biological role, involved in the restart of stalled replication forks, which reloads the replicative helicase on sites other than the origin of replication. Can function in multiple replication restart pathways. Displaces ssDNA from a PriB-ssDNA complex. Probably forms a spiral filament on ssDNA. This Shigella boydii serotype 18 (strain CDC 3083-94 / BS512) protein is Replication restart protein DnaT.